Here is a 297-residue protein sequence, read N- to C-terminus: uncharacterized protein (297 aa).

3 disordered regions span residues 1–20, 39–100, and 174–297; these read MDTL…NADV, IEKD…ENLG, and VQKA…NEDQ. In terms of domain architecture, RRM spans 101-179; that stretch reads NDLFVSGIAS…RVLNVQKAKR (79 aa). Residue S184 is modified to Phosphoserine. Basic and acidic residues-rich tracts occupy residues 209 to 223 and 233 to 253; these read GGYR…DSNR and PQRE…DSRP. Positions 254–263 are enriched in basic residues; the sequence is RRERHFHGRS. Residues 287 to 297 are compositionally biased toward polar residues; the sequence is SHSSVPPNEDQ.

The protein localises to the nucleus. This is an uncharacterized protein from Schizosaccharomyces pombe (strain 972 / ATCC 24843) (Fission yeast).